Here is a 334-residue protein sequence, read N- to C-terminus: Phenylalanine--tRNA ligase alpha subunit (334 aa).

Glu249 contacts Mg(2+).

This sequence belongs to the class-II aminoacyl-tRNA synthetase family. Phe-tRNA synthetase alpha subunit type 1 subfamily. As to quaternary structure, tetramer of two alpha and two beta subunits. Mg(2+) is required as a cofactor.

It localises to the cytoplasm. The enzyme catalyses tRNA(Phe) + L-phenylalanine + ATP = L-phenylalanyl-tRNA(Phe) + AMP + diphosphate + H(+). The chain is Phenylalanine--tRNA ligase alpha subunit from Desulfatibacillum aliphaticivorans.